Here is a 214-residue protein sequence, read N- to C-terminus: Methyltransferase HEMK2 (214 aa).

The S-adenosyl-L-homocysteine site is built by Thr-29, Glu-51, Gly-53, Asp-77, Asp-103, Leu-104, and Asn-122. S-adenosyl-L-methionine contacts are provided by Thr-29, Glu-51, Gly-53, Asp-77, Asp-103, Leu-104, and Asn-122. Asn-122 contributes to the a protein binding site.

This sequence belongs to the eukaryotic/archaeal PrmC-related family. As to quaternary structure, heterodimer; heterodimerization with TRMT112 is required for S-adenosyl-L-methionine-binding. Does not interact with TRMT112. Ubiquitinated, leading to its degradation by the proteasome. In terms of tissue distribution, widely expressed, with highest expression in parathyroid and pituitary glands, followed by adrenal gland and kidney, and lowest expression in leukocytes and mammary gland.

The protein localises to the nucleus. It catalyses the reaction L-lysyl-[histone] + S-adenosyl-L-methionine = N(6)-methyl-L-lysyl-[histone] + S-adenosyl-L-homocysteine + H(+). It carries out the reaction L-glutaminyl-[protein] + S-adenosyl-L-methionine = N(5)-methyl-L-glutaminyl-[protein] + S-adenosyl-L-homocysteine + H(+). The enzyme catalyses methylarsonous acid + S-adenosyl-L-methionine = dimethylarsinate + S-adenosyl-L-homocysteine + 2 H(+). Its function is as follows. Methyltransferase that can methylate proteins and, to a lower extent, arsenic. Catalytic subunit of a heterodimer with TRMT112, which monomethylates 'Lys-12' of histone H4 (H4K12me1), a modification present at the promoters of numerous genes encoding cell cycle regulators. Catalytic subunit of a heterodimer with TRMT112, which catalyzes N5-methylation of Glu residue of proteins with a Gly-Gln-Xaa-Xaa-Xaa-Arg motif. Methylates ETF1 on 'Gln-185'; ETF1 needs to be complexed to ERF3 in its GTP-bound form to be efficiently methylated. May also play a role in the modulation of arsenic-induced toxicity by mediating the conversion of monomethylarsonous acid (3+) into the less toxic dimethylarsonic acid. It however only plays a limited role in arsenic metabolism compared with AS3MT. In Homo sapiens (Human), this protein is Methyltransferase HEMK2.